The following is a 223-amino-acid chain: UPF0758 protein Plut_0598 (223 aa).

The region spanning Arg100–Leu222 is the MPN domain. The Zn(2+) site is built by His171, His173, and Asp184. Positions His171–Asp184 match the JAMM motif motif.

This sequence belongs to the UPF0758 family.

This Chlorobium luteolum (strain DSM 273 / BCRC 81028 / 2530) (Pelodictyon luteolum) protein is UPF0758 protein Plut_0598.